The chain runs to 386 residues: Bifunctional chorismate mutase/prephenate dehydratase (386 aa).

The Chorismate mutase domain maps to 1–92; the sequence is MTSENPLLAL…DSVLTQQALL (92 aa). Residues Arg11, Arg28, Lys39, Asp48, Glu52, Ser84, and Gln88 each contribute to the substrate site. Residues 105-285 enclose the Prephenate dehydratase domain; sequence RIAFLGPKGS…NFTRFVVLAR (181 aa). The 78-residue stretch at 299–376 folds into the ACT domain; it reads TLLMATGQQA…RSMKVLGCYP (78 aa).

The protein resides in the cytoplasm. It carries out the reaction chorismate = prephenate. The enzyme catalyses prephenate + H(+) = 3-phenylpyruvate + CO2 + H2O. Its pathway is amino-acid biosynthesis; L-phenylalanine biosynthesis; phenylpyruvate from prephenate: step 1/1. The protein operates within metabolic intermediate biosynthesis; prephenate biosynthesis; prephenate from chorismate: step 1/1. In terms of biological role, catalyzes the Claisen rearrangement of chorismate to prephenate and the decarboxylation/dehydration of prephenate to phenylpyruvate. The sequence is that of Bifunctional chorismate mutase/prephenate dehydratase (pheA) from Escherichia coli O157:H7.